The following is a 266-amino-acid chain: Indole-3-glycerol phosphate synthase (266 aa).

The protein belongs to the TrpC family.

The enzyme catalyses 1-(2-carboxyphenylamino)-1-deoxy-D-ribulose 5-phosphate + H(+) = (1S,2R)-1-C-(indol-3-yl)glycerol 3-phosphate + CO2 + H2O. The protein operates within amino-acid biosynthesis; L-tryptophan biosynthesis; L-tryptophan from chorismate: step 4/5. The chain is Indole-3-glycerol phosphate synthase from Herminiimonas arsenicoxydans.